Consider the following 685-residue polypeptide: Kinesin-related protein 11 (685 aa).

A Kinesin motor domain is found at 4–405; that stretch reads NISVSVRARP…LKFASRAKKI (402 aa). Residues 36 to 105 form a disordered region; it reads TSLPPPITQP…TTVPASPAPT (70 aa). Over residues 47-105 the composition is skewed to low complexity; it reads SSLPPISTPIKSSSSSSTSTSAGSLKTPLKTPLKTPLKTPLKTNSTTTNTTVPASPAPT. Residue 156-163 participates in ATP binding; it reads GITSSGKT. A coiled-coil region spans residues 411–488; it reads VNEILDDKAL…KINNLNKLIL (78 aa). The disordered stretch occupies residues 495-568; the sequence is NSASKGGSGS…QSTSSLTIGG (74 aa). Polar residues predominate over residues 511–520; sequence RSTFVSPSQN. A compositionally biased stretch (low complexity) spans 533–565; that stretch reads PNSFSNLLLQSPSQNNNNNSHISPLSQSTSSLT. Residues 574–683 are a coiled coil; it reads FESNELIQIQ…LKSKIQEYEV (110 aa).

This sequence belongs to the TRAFAC class myosin-kinesin ATPase superfamily. Kinesin family.

It is found in the cytoplasm. The protein resides in the cytoskeleton. Functionally, microtubule-associated force-producing protein that plays a role in organelle transport. Its motor activity is directed toward the microtubule's plus end. The chain is Kinesin-related protein 11 (kif11) from Dictyostelium discoideum (Social amoeba).